Reading from the N-terminus, the 249-residue chain is MTRYKAIISYDGHDFAGFQRQPHARSVQEEIEKTLTRINKGQPVVIHGAGRTDSGVHALGQVLHFDLPEERDGEKLRFALDTQTPEDIDFISVEQVSDDFHSRYNKHSKTYEFLVDIGRPKNPMMRHYATHYPYPLELSLLEEAITQLEGTHDFTGFTASGTSVEDKVRTITEAKVRYDAERNFLVFTFSGNGFLYKQIRNMVGTLLKIGNKRMPVEQIQRILAEKDRHLAGPTAGPNGLYLKEIRYEE.

The Nucleophile role is filled by D53. A substrate-binding site is contributed by Y111.

Belongs to the tRNA pseudouridine synthase TruA family. Homodimer.

It catalyses the reaction uridine(38/39/40) in tRNA = pseudouridine(38/39/40) in tRNA. In terms of biological role, formation of pseudouridine at positions 38, 39 and 40 in the anticodon stem and loop of transfer RNAs. This chain is tRNA pseudouridine synthase A, found in Streptococcus gordonii (strain Challis / ATCC 35105 / BCRC 15272 / CH1 / DL1 / V288).